Consider the following 101-residue polypeptide: Threonine-rich inner membrane protein GfcA (101 aa).

Residues M1–A21 form the signal peptide. Residues A22 to A59 lie on the Cytoplasmic side of the membrane. The disordered stretch occupies residues E24–A45. A helical transmembrane segment spans residues V60–V80. Residues A81–R101 lie on the Periplasmic side of the membrane. The segment at A82 to R101 is disordered.

The protein localises to the cell inner membrane. The sequence is that of Threonine-rich inner membrane protein GfcA (gfcA) from Escherichia coli (strain K12).